Reading from the N-terminus, the 839-residue chain is Taste receptor type 1 member 2 (839 aa).

The signal sequence occupies residues 1-19; sequence MGPRATTICSLFFLLWVLA. Over 20-566 the chain is Extracellular; that stretch reads EPAENSDFYL…AFLEWHEAPT (547 aa). N-linked (GlcNAc...) asparagine glycosylation is found at asparagine 84, asparagine 248, asparagine 292, asparagine 312, asparagine 368, asparagine 428, asparagine 487, and asparagine 527. A helical membrane pass occupies residues 567-587; the sequence is IAVALLAALGFLSTLAILVIF. At 588–602 the chain is on the cytoplasmic side; it reads WRHFQTPMVRSAGGP. A helical membrane pass occupies residues 603–623; that stretch reads MCFLMLTLLLVAYMVVPVYVG. Over 624-635 the chain is Extracellular; the sequence is PPKVSTCLCRQA. A helical transmembrane segment spans residues 636–656; the sequence is LFPLCFTICISCIAVRSFQII. At 657-681 the chain is on the cytoplasmic side; it reads CAFKMASRFPRAYSYWVRYQGPYVS. A helical membrane pass occupies residues 682-702; it reads MAFITVLKMVIVVIGMLATGL. Topologically, residues 703–727 are extracellular; that stretch reads NPTTRTDPDDPKIMIVSCNPNYRNS. The chain crosses the membrane as a helical span at residues 728-748; it reads LLFNTSLDLLLSVVGFSFANM. Over 749–760 the chain is Cytoplasmic; that stretch reads GKELPTNYNEAK. The helical transmembrane segment at 761–781 threads the bilayer; sequence FITLSMTFYFTSSISLCTFMS. Topologically, residues 782–784 are extracellular; that stretch reads AYS. The helical transmembrane segment at 785–805 threads the bilayer; that stretch reads GVLVTIVDLLVTVLNLLAISL. At 806–839 the chain is on the cytoplasmic side; the sequence is GYFGPKCYMILFYPERNTPAYFNSVIQGYTMTRD.

The protein belongs to the G-protein coupled receptor 3 family. TAS1R subfamily. Forms heterodimers with TAS1R3.

The protein localises to the cell membrane. In terms of biological role, putative taste receptor. TAS1R2/TAS1R3 recognizes diverse natural and synthetic sweeteners. In Pongo pygmaeus (Bornean orangutan), this protein is Taste receptor type 1 member 2 (TAS1R2).